The sequence spans 316 residues: Transaldolase (316 aa).

The active-site Schiff-base intermediate with substrate is the Lys-131.

The protein belongs to the transaldolase family. Type 1 subfamily. In terms of assembly, homodimer.

The protein localises to the cytoplasm. The enzyme catalyses D-sedoheptulose 7-phosphate + D-glyceraldehyde 3-phosphate = D-erythrose 4-phosphate + beta-D-fructose 6-phosphate. Its pathway is carbohydrate degradation; pentose phosphate pathway; D-glyceraldehyde 3-phosphate and beta-D-fructose 6-phosphate from D-ribose 5-phosphate and D-xylulose 5-phosphate (non-oxidative stage): step 2/3. Functionally, transaldolase is important for the balance of metabolites in the pentose-phosphate pathway. This Chromohalobacter salexigens (strain ATCC BAA-138 / DSM 3043 / CIP 106854 / NCIMB 13768 / 1H11) protein is Transaldolase.